Reading from the N-terminus, the 413-residue chain is Endoplasmic reticulum resident protein 44.2 (413 aa).

The signal sequence occupies residues 1–21 (MNLASVLLLLAACHLSVSVNG). In terms of domain architecture, Thioredoxin spans 22 to 136 (QEHKEAIELS…LTNFVKFQLS (115 aa)). A disulfide bridge links Cys-184 with Cys-233. N-linked (GlcNAc...) asparagine glycosylation is present at Asn-264. The segment at 367–413 (KAARGITDDHEAQAPSTRPIDTTPPPSVFKELKPSDKRYSILQKSEL) is disordered. A compositionally biased stretch (basic and acidic residues) spans 396 to 413 (KELKPSDKRYSILQKSEL). A Prevents secretion from ER motif is present at residues 410–413 (KSEL).

Its subcellular location is the endoplasmic reticulum lumen. The polypeptide is Endoplasmic reticulum resident protein 44.2 (Caenorhabditis elegans).